A 337-amino-acid chain; its full sequence is Probable dihydroorotase (337 aa).

6 residues coordinate Zn(2+): His12, His14, Lys95, His132, His170, and Asp240. The residue at position 95 (Lys95) is an N6-carboxylysine.

It belongs to the metallo-dependent hydrolases superfamily. DHOase family. Class II DHOase subfamily. Zn(2+) serves as cofactor.

The enzyme catalyses (S)-dihydroorotate + H2O = N-carbamoyl-L-aspartate + H(+). Its pathway is pyrimidine metabolism; UMP biosynthesis via de novo pathway; (S)-dihydroorotate from bicarbonate: step 3/3. In Schizosaccharomyces pombe (strain 972 / ATCC 24843) (Fission yeast), this protein is Probable dihydroorotase (ura2).